The sequence spans 144 residues: 3-dehydroquinate dehydratase (144 aa).

The active-site Proton acceptor is the Y22. Substrate contacts are provided by N73, H79, and D86. Catalysis depends on H99, which acts as the Proton donor. Substrate-binding positions include I100–S101 and R110.

This sequence belongs to the type-II 3-dehydroquinase family. In terms of assembly, homododecamer.

The enzyme catalyses 3-dehydroquinate = 3-dehydroshikimate + H2O. It participates in metabolic intermediate biosynthesis; chorismate biosynthesis; chorismate from D-erythrose 4-phosphate and phosphoenolpyruvate: step 3/7. In terms of biological role, catalyzes a trans-dehydration via an enolate intermediate. This chain is 3-dehydroquinate dehydratase, found in Clostridium acetobutylicum (strain ATCC 824 / DSM 792 / JCM 1419 / IAM 19013 / LMG 5710 / NBRC 13948 / NRRL B-527 / VKM B-1787 / 2291 / W).